A 274-amino-acid chain; its full sequence is 2,3,4,5-tetrahydropyridine-2,6-dicarboxylate N-succinyltransferase (274 aa).

2 residues coordinate substrate: arginine 103 and aspartate 140.

The protein belongs to the transferase hexapeptide repeat family. Homotrimer.

It localises to the cytoplasm. The catalysed reaction is (S)-2,3,4,5-tetrahydrodipicolinate + succinyl-CoA + H2O = (S)-2-succinylamino-6-oxoheptanedioate + CoA. It participates in amino-acid biosynthesis; L-lysine biosynthesis via DAP pathway; LL-2,6-diaminopimelate from (S)-tetrahydrodipicolinate (succinylase route): step 1/3. The protein is 2,3,4,5-tetrahydropyridine-2,6-dicarboxylate N-succinyltransferase of Haemophilus ducreyi (strain 35000HP / ATCC 700724).